We begin with the raw amino-acid sequence, 199 residues long: Imidazole glycerol phosphate synthase subunit HisH (199 aa).

The Glutamine amidotransferase type-1 domain occupies 3–199 (NITIIDTGCA…LKNFVEKVPF (197 aa)). Cys-78 acts as the Nucleophile in catalysis. Active-site residues include His-178 and Glu-180.

As to quaternary structure, heterodimer of HisH and HisF.

It is found in the cytoplasm. The enzyme catalyses 5-[(5-phospho-1-deoxy-D-ribulos-1-ylimino)methylamino]-1-(5-phospho-beta-D-ribosyl)imidazole-4-carboxamide + L-glutamine = D-erythro-1-(imidazol-4-yl)glycerol 3-phosphate + 5-amino-1-(5-phospho-beta-D-ribosyl)imidazole-4-carboxamide + L-glutamate + H(+). The catalysed reaction is L-glutamine + H2O = L-glutamate + NH4(+). Its pathway is amino-acid biosynthesis; L-histidine biosynthesis; L-histidine from 5-phospho-alpha-D-ribose 1-diphosphate: step 5/9. IGPS catalyzes the conversion of PRFAR and glutamine to IGP, AICAR and glutamate. The HisH subunit catalyzes the hydrolysis of glutamine to glutamate and ammonia as part of the synthesis of IGP and AICAR. The resulting ammonia molecule is channeled to the active site of HisF. This Haemophilus influenzae (strain 86-028NP) protein is Imidazole glycerol phosphate synthase subunit HisH.